Here is a 476-residue protein sequence, read N- to C-terminus: Argininosuccinate lyase (476 aa).

Belongs to the lyase 1 family. Argininosuccinate lyase subfamily.

Its subcellular location is the cytoplasm. It carries out the reaction 2-(N(omega)-L-arginino)succinate = fumarate + L-arginine. It participates in amino-acid biosynthesis; L-arginine biosynthesis; L-arginine from L-ornithine and carbamoyl phosphate: step 3/3. The protein is Argininosuccinate lyase of Thermobifida fusca (strain YX).